Consider the following 776-residue polypeptide: Bifunctional lysine-specific demethylase and histidyl-hydroxylase NO66 (776 aa).

Disordered regions lie at residues 1 to 57, 87 to 126, and 165 to 288; these read MGKK…EPKF, EQNG…AHKH, and ILDE…DDEG. 2 stretches are compositionally biased toward basic and acidic residues: residues 47 to 57 and 98 to 119; these read HYKEPSKEPKF and EISP…DGVA. The span at 166–204 shows a compositional bias: acidic residues; that stretch reads LDEEVEDEEIDEEEFEDEEEVEDEEGMDEDETEIDESEM. Residues 206 to 216 are compositionally biased toward basic and acidic residues; it reads VDPKDIERCIE. Positions 217 to 288 are enriched in acidic residues; sequence FEDVDDEDEM…EMDADSDDEG (72 aa). A JmjC domain is found at 425–569; sequence QLVNPQTFDD…NLMEKVIPEA (145 aa). The Fe cation site is built by H468, D470, and H535.

The protein belongs to the ROX family. NO66 subfamily. The cofactor is Fe(2+).

Its subcellular location is the nucleus. The catalysed reaction is N(6),N(6)-dimethyl-L-lysyl(36)-[histone H3] + 2 2-oxoglutarate + 2 O2 = L-lysyl(36)-[histone H3] + 2 formaldehyde + 2 succinate + 2 CO2. Functionally, oxygenase that can act as both a histone lysine demethylase and a ribosomal histidine hydroxylase. Specifically demethylates 'Lys-4' (H3K4me) and 'Lys-36' (H3K36me) of histone H3, thereby playing a central role in histone code. The polypeptide is Bifunctional lysine-specific demethylase and histidyl-hydroxylase NO66 (jmjc-1) (Caenorhabditis briggsae).